The primary structure comprises 117 residues: Large ribosomal subunit protein bL20c (117 aa).

The protein belongs to the bacterial ribosomal protein bL20 family.

It localises to the plastid. Its subcellular location is the chloroplast. Its function is as follows. Binds directly to 23S ribosomal RNA and is necessary for the in vitro assembly process of the 50S ribosomal subunit. It is not involved in the protein synthesizing functions of that subunit. In Chloranthus spicatus (Chulantree), this protein is Large ribosomal subunit protein bL20c.